We begin with the raw amino-acid sequence, 300 residues long: Small ribosomal subunit protein uS2 (300 aa).

The segment at 278–300 (GEAQTGNEGWGTEAAAPAATTQW) is disordered.

This sequence belongs to the universal ribosomal protein uS2 family. In terms of assembly, component of the small ribosomal subunit. Mature ribosomes consist of a small (40S) and a large (60S) subunit. The 40S subunit contains about 33 different proteins and 1 molecule of RNA (18S). The 60S subunit contains about 49 different proteins and 3 molecules of RNA (25S, 5.8S and 5S). Interacts with rps21.

The protein resides in the cytoplasm. Required for the assembly and/or stability of the 40S ribosomal subunit. Required for the processing of the 20S rRNA-precursor to mature 18S rRNA in a late step of the maturation of 40S ribosomal subunits. The chain is Small ribosomal subunit protein uS2 (rps0) from Pyrenophora tritici-repentis (strain Pt-1C-BFP) (Wheat tan spot fungus).